Here is an 80-residue protein sequence, read N- to C-terminus: Raniseptin-7 (80 aa).

The first 22 residues, 1 to 22 (MAFLKKSLFLVLFLGIVSLSIC), serve as a signal peptide directing secretion. The propeptide occupies 23–49 (EEEKREGEEEEKQEEENEELSEEELRE). Residues 27–46 (REGEEEEKQEEENEELSEEE) form a disordered region. Residues 30 to 44 (EEEEKQEEENEELSE) are compositionally biased toward acidic residues.

This sequence belongs to the frog skin active peptide (FSAP) family. Dermaseptin subfamily. As to expression, expressed by the skin glands.

The protein localises to the secreted. Its function is as follows. Has antibacterial activity. In Boana raniceps (Chaco tree frog), this protein is Raniseptin-7.